The primary structure comprises 246 residues: 5'-nucleotidase SurE (246 aa).

The a divalent metal cation site is built by D8, D9, S39, and N91.

The protein belongs to the SurE nucleotidase family. A divalent metal cation serves as cofactor.

It is found in the cytoplasm. The catalysed reaction is a ribonucleoside 5'-phosphate + H2O = a ribonucleoside + phosphate. Functionally, nucleotidase that shows phosphatase activity on nucleoside 5'-monophosphates. The polypeptide is 5'-nucleotidase SurE (Actinobacillus succinogenes (strain ATCC 55618 / DSM 22257 / CCUG 43843 / 130Z)).